The primary structure comprises 316 residues: 4-hydroxy-3-methylbut-2-enyl diphosphate reductase (316 aa).

Residue cysteine 12 participates in [4Fe-4S] cluster binding. The (2E)-4-hydroxy-3-methylbut-2-enyl diphosphate site is built by histidine 41 and histidine 74. Residues histidine 41 and histidine 74 each coordinate dimethylallyl diphosphate. Isopentenyl diphosphate contacts are provided by histidine 41 and histidine 74. A [4Fe-4S] cluster-binding site is contributed by cysteine 96. Position 124 (histidine 124) interacts with (2E)-4-hydroxy-3-methylbut-2-enyl diphosphate. Histidine 124 is a dimethylallyl diphosphate binding site. Histidine 124 provides a ligand contact to isopentenyl diphosphate. The Proton donor role is filled by glutamate 126. Residue threonine 167 participates in (2E)-4-hydroxy-3-methylbut-2-enyl diphosphate binding. Cysteine 197 serves as a coordination point for [4Fe-4S] cluster. (2E)-4-hydroxy-3-methylbut-2-enyl diphosphate-binding residues include serine 225, serine 226, asparagine 227, and serine 269. Dimethylallyl diphosphate is bound by residues serine 225, serine 226, asparagine 227, and serine 269. Residues serine 225, serine 226, asparagine 227, and serine 269 each contribute to the isopentenyl diphosphate site.

It belongs to the IspH family. Homodimer. It depends on [4Fe-4S] cluster as a cofactor.

It carries out the reaction isopentenyl diphosphate + 2 oxidized [2Fe-2S]-[ferredoxin] + H2O = (2E)-4-hydroxy-3-methylbut-2-enyl diphosphate + 2 reduced [2Fe-2S]-[ferredoxin] + 2 H(+). The catalysed reaction is dimethylallyl diphosphate + 2 oxidized [2Fe-2S]-[ferredoxin] + H2O = (2E)-4-hydroxy-3-methylbut-2-enyl diphosphate + 2 reduced [2Fe-2S]-[ferredoxin] + 2 H(+). It participates in isoprenoid biosynthesis; dimethylallyl diphosphate biosynthesis; dimethylallyl diphosphate from (2E)-4-hydroxy-3-methylbutenyl diphosphate: step 1/1. It functions in the pathway isoprenoid biosynthesis; isopentenyl diphosphate biosynthesis via DXP pathway; isopentenyl diphosphate from 1-deoxy-D-xylulose 5-phosphate: step 6/6. In terms of biological role, catalyzes the conversion of 1-hydroxy-2-methyl-2-(E)-butenyl 4-diphosphate (HMBPP) into a mixture of isopentenyl diphosphate (IPP) and dimethylallyl diphosphate (DMAPP). Acts in the terminal step of the DOXP/MEP pathway for isoprenoid precursor biosynthesis. This chain is 4-hydroxy-3-methylbut-2-enyl diphosphate reductase, found in Klebsiella pneumoniae (strain 342).